We begin with the raw amino-acid sequence, 393 residues long: Putative mitochondrial cysteine synthase (393 aa).

The helical transmembrane segment at 12-31 threads the bilayer; sequence LAWRECISIASVLIGAYASY. The residue at position 86 (Lys-86) is an N6-(pyridoxal phosphate)lysine. Pyridoxal 5'-phosphate is bound by residues 230–234 and Ser-338; that span reads GTGGT.

Belongs to the cysteine synthase/cystathionine beta-synthase family. It depends on pyridoxal 5'-phosphate as a cofactor.

The protein resides in the mitochondrion. Its subcellular location is the mitochondrion outer membrane. The enzyme catalyses O-acetyl-L-serine + hydrogen sulfide = L-cysteine + acetate. Functionally, putative cysteine synthase that catalyzes the conversion of O-acetyl-L-serine (OAS) into cysteine, the last step in the cysteine biosynthesis pathway. However, this CS-like protein is unlikely to function in cysteine biosynthesis. It seems that in S.cerevisiae cysteine biosynthesis occurs exclusively through the cystathionine pathway and not via direct incorporation of sulfur into OAS. In Saccharomyces cerevisiae (strain ATCC 204508 / S288c) (Baker's yeast), this protein is Putative mitochondrial cysteine synthase.